The sequence spans 646 residues: Cysteine-rich receptor-like protein kinase 37 (646 aa).

A signal peptide spans Met1 to Ala26. Gnk2-homologous domains follow at residues Gly27–Thr132 and Thr142–Tyr252. Residues Gly27 to Asn287 lie on the Extracellular side of the membrane. N-linked (GlcNAc...) asparagine glycosylation is found at Asn62, Asn129, Asn169, and Asn180. A helical transmembrane segment spans residues Ile288–Ser308. Topologically, residues Trp309–His646 are cytoplasmic. Residues Phe345–Ile626 form the Protein kinase domain. ATP is bound by residues Leu351–Val359 and Lys373. Phosphotyrosine is present on Tyr418. Residue Asp470 is the Proton acceptor of the active site. Ser474 bears the Phosphoserine mark. A Phosphothreonine modification is found at Thr510. Position 518 is a phosphotyrosine (Tyr518).

This sequence belongs to the protein kinase superfamily. Ser/Thr protein kinase family. CRK subfamily.

Its subcellular location is the membrane. The catalysed reaction is L-seryl-[protein] + ATP = O-phospho-L-seryl-[protein] + ADP + H(+). The enzyme catalyses L-threonyl-[protein] + ATP = O-phospho-L-threonyl-[protein] + ADP + H(+). The chain is Cysteine-rich receptor-like protein kinase 37 (CRK37) from Arabidopsis thaliana (Mouse-ear cress).